Here is an 839-residue protein sequence, read N- to C-terminus: Protein translocase subunit SecA (839 aa).

ATP-binding positions include glutamine 85, 103–107 (GEGKT), and aspartate 493. Over residues 780–790 (QIHEQERERAS) the composition is skewed to basic and acidic residues. Residues 780–839 (QIHEQERERASQRATTAAPQNIQSQQSANTDDLPKVERNEACPCGSGKKFKNCHGRKSFS) are disordered. The segment covering 791 to 809 (QRATTAAPQNIQSQQSANT) has biased composition (polar residues). Cysteine 821, cysteine 823, cysteine 832, and histidine 833 together coordinate Zn(2+). Residues 827-839 (KKFKNCHGRKSFS) show a composition bias toward basic residues.

Belongs to the SecA family. In terms of assembly, monomer and homodimer. Part of the essential Sec protein translocation apparatus which comprises SecA, SecYEG and auxiliary proteins SecDF. Other proteins may also be involved. Requires Zn(2+) as cofactor.

Its subcellular location is the cell membrane. The protein resides in the cytoplasm. The catalysed reaction is ATP + H2O + cellular proteinSide 1 = ADP + phosphate + cellular proteinSide 2.. In terms of biological role, part of the Sec protein translocase complex. Interacts with the SecYEG preprotein conducting channel. Has a central role in coupling the hydrolysis of ATP to the transfer of proteins into and across the cell membrane, serving as an ATP-driven molecular motor driving the stepwise translocation of polypeptide chains across the membrane. This chain is Protein translocase subunit SecA, found in Streptococcus pyogenes serotype M6 (strain ATCC BAA-946 / MGAS10394).